A 206-amino-acid chain; its full sequence is Dihydrofolate reductase (206 aa).

The DHFR domain occupies 6–204 (SLTLIVALTT…FDYEFEMWTR (199 aa)). NADP(+) is bound by residues alanine 12 and 18 to 24 (GIGRSNS). Position 32–37 (32–37 (EISYFK)) interacts with substrate. 59–61 (RKT) contacts NADP(+). Substrate is bound at residue arginine 75. NADP(+)-binding positions include 81–83 (TRN) and 124–131 (GGAQLYKA).

Belongs to the dihydrofolate reductase family.

The catalysed reaction is (6S)-5,6,7,8-tetrahydrofolate + NADP(+) = 7,8-dihydrofolate + NADPH + H(+). Its pathway is cofactor biosynthesis; tetrahydrofolate biosynthesis; 5,6,7,8-tetrahydrofolate from 7,8-dihydrofolate: step 1/1. Key enzyme in folate metabolism. Catalyzes an essential reaction for de novo glycine and purine synthesis, and for DNA precursor synthesis. This is Dihydrofolate reductase from Pneumocystis carinii.